The chain runs to 344 residues: Arginine N-succinyltransferase (344 aa).

Leu125 is a binding site for succinyl-CoA. His229 serves as the catalytic Proton donor.

The protein belongs to the arginine N-succinyltransferase family.

The enzyme catalyses succinyl-CoA + L-arginine = N(2)-succinyl-L-arginine + CoA + H(+). It participates in amino-acid degradation; L-arginine degradation via AST pathway; L-glutamate and succinate from L-arginine: step 1/5. Its function is as follows. Catalyzes the transfer of succinyl-CoA to arginine to produce N(2)-succinylarginine. The protein is Arginine N-succinyltransferase of Escherichia coli O127:H6 (strain E2348/69 / EPEC).